The following is a 279-amino-acid chain: Proteasome subunit beta (279 aa).

A propeptide spans 1 to 53 (MSGTAEFPGRIPAPYLEVGSSSFVELLGSVAPELLPGRRPLPPGDMGDAAPHG) (removed in mature form; by autocatalysis). Thr54 acts as the Nucleophile in catalysis.

It belongs to the peptidase T1B family. The 20S proteasome core is composed of 14 alpha and 14 beta subunits that assemble into four stacked heptameric rings, resulting in a barrel-shaped structure. The two inner rings, each composed of seven catalytic beta subunits, are sandwiched by two outer rings, each composed of seven alpha subunits. The catalytic chamber with the active sites is on the inside of the barrel. Has a gated structure, the ends of the cylinder being occluded by the N-termini of the alpha-subunits. Is capped by the proteasome-associated ATPase, ARC.

It localises to the cytoplasm. It catalyses the reaction Cleavage of peptide bonds with very broad specificity.. It functions in the pathway protein degradation; proteasomal Pup-dependent pathway. The formation of the proteasomal ATPase ARC-20S proteasome complex, likely via the docking of the C-termini of ARC into the intersubunit pockets in the alpha-rings, may trigger opening of the gate for substrate entry. Interconversion between the open-gate and close-gate conformations leads to a dynamic regulation of the 20S proteasome proteolysis activity. In terms of biological role, component of the proteasome core, a large protease complex with broad specificity involved in protein degradation. In Stackebrandtia nassauensis (strain DSM 44728 / CIP 108903 / NRRL B-16338 / NBRC 102104 / LLR-40K-21), this protein is Proteasome subunit beta.